The primary structure comprises 189 residues: FUN14 domain-containing protein 2 (189 aa).

Residues 1 to 80 (METSAPRAGS…GQESGPSAEK (80 aa)) are Cytoplasmic-facing. A phosphoserine mark is found at S10 and S53. The helical transmembrane segment at 81 to 101 (YSVATQLFIGGVTGWCTGFIF) threads the bilayer. Topologically, residues 102-107 (QNVGKL) are mitochondrial intermembrane. A helical membrane pass occupies residues 108–128 (AATAVGGGFFLLQLANHTGYI). The Cytoplasmic segment spans residues 129-164 (KVDWQRVEKDMKKAKEQLKIRKSNQMPTEVRSKAEE). A Phosphoserine modification is found at S151. The helical transmembrane segment at 165–185 (VVSFVKKNVLVTGGFFGGFLL) threads the bilayer. The Mitochondrial intermembrane segment spans residues 186 to 189 (GMAS).

This sequence belongs to the FUN14 family.

It localises to the mitochondrion outer membrane. The protein resides in the nucleus. Binds directly and specifically 1,2-Diacyl-sn-glycero-3-phospho-(1'-myo-inositol-3',4',5'-bisphosphate) (PIP3) leading to the recruitment of PIP3 to mitochondria and may play a role in the regulation of the platelet activation via AKT/GSK3B/cGMP signaling pathways. May act as transcription factor that regulates SREBP1 (isoform SREBP-1C) expression in order to modulate triglyceride (TG) homeostasis in hepatocytes. The protein is FUN14 domain-containing protein 2 of Macaca mulatta (Rhesus macaque).